Reading from the N-terminus, the 243-residue chain is Pyridoxine 5'-phosphate synthase (243 aa).

Asparagine 9 contacts 3-amino-2-oxopropyl phosphate. 1-deoxy-D-xylulose 5-phosphate is bound at residue 11 to 12 (DH). Residue arginine 20 coordinates 3-amino-2-oxopropyl phosphate. Residue histidine 45 is the Proton acceptor of the active site. 1-deoxy-D-xylulose 5-phosphate contacts are provided by arginine 47 and histidine 52. Glutamate 72 serves as the catalytic Proton acceptor. Threonine 102 contacts 1-deoxy-D-xylulose 5-phosphate. Catalysis depends on histidine 193, which acts as the Proton donor. 3-amino-2-oxopropyl phosphate-binding positions include glycine 194 and 215–216 (GH).

This sequence belongs to the PNP synthase family. As to quaternary structure, homooctamer; tetramer of dimers.

It is found in the cytoplasm. It carries out the reaction 3-amino-2-oxopropyl phosphate + 1-deoxy-D-xylulose 5-phosphate = pyridoxine 5'-phosphate + phosphate + 2 H2O + H(+). Its pathway is cofactor biosynthesis; pyridoxine 5'-phosphate biosynthesis; pyridoxine 5'-phosphate from D-erythrose 4-phosphate: step 5/5. Its function is as follows. Catalyzes the complicated ring closure reaction between the two acyclic compounds 1-deoxy-D-xylulose-5-phosphate (DXP) and 3-amino-2-oxopropyl phosphate (1-amino-acetone-3-phosphate or AAP) to form pyridoxine 5'-phosphate (PNP) and inorganic phosphate. This is Pyridoxine 5'-phosphate synthase from Photorhabdus laumondii subsp. laumondii (strain DSM 15139 / CIP 105565 / TT01) (Photorhabdus luminescens subsp. laumondii).